A 336-amino-acid chain; its full sequence is Galectin-12 (336 aa).

2 consecutive Galectin domains span residues 49–183 (YVTT…VGFL) and 212–336 (CSHA…CVHS).

In terms of tissue distribution, not widely expressed. Predominantly expressed in adipose tissue.

The protein resides in the nucleus. In terms of biological role, binds lactose. May participate in the apoptosis of adipocytes. This is Galectin-12 (LGALS12) from Homo sapiens (Human).